The primary structure comprises 463 residues: Trigger factor (463 aa).

The region spanning 162–243 (GDVVTLDLEA…VSQVAARELP (82 aa)) is the PPIase FKBP-type domain. The interval 427 to 463 (TNGEIVDLDDEDETESTPETTEAAEAAEESTEDKPEA) is disordered. Acidic residues predominate over residues 432-442 (VDLDDEDETES).

It belongs to the FKBP-type PPIase family. Tig subfamily.

It localises to the cytoplasm. The enzyme catalyses [protein]-peptidylproline (omega=180) = [protein]-peptidylproline (omega=0). Its function is as follows. Involved in protein export. Acts as a chaperone by maintaining the newly synthesized protein in an open conformation. Functions as a peptidyl-prolyl cis-trans isomerase. This Streptomyces avermitilis (strain ATCC 31267 / DSM 46492 / JCM 5070 / NBRC 14893 / NCIMB 12804 / NRRL 8165 / MA-4680) protein is Trigger factor.